The following is a 156-amino-acid chain: Small ribosomal subunit protein uS7 (156 aa).

Belongs to the universal ribosomal protein uS7 family. As to quaternary structure, part of the 30S ribosomal subunit. Contacts proteins S9 and S11.

Its function is as follows. One of the primary rRNA binding proteins, it binds directly to 16S rRNA where it nucleates assembly of the head domain of the 30S subunit. Is located at the subunit interface close to the decoding center, probably blocks exit of the E-site tRNA. In Campylobacter concisus (strain 13826), this protein is Small ribosomal subunit protein uS7.